The primary structure comprises 105 residues: Large ribosomal subunit protein uL24 (105 aa).

The protein belongs to the universal ribosomal protein uL24 family. Part of the 50S ribosomal subunit.

In terms of biological role, one of two assembly initiator proteins, it binds directly to the 5'-end of the 23S rRNA, where it nucleates assembly of the 50S subunit. Functionally, one of the proteins that surrounds the polypeptide exit tunnel on the outside of the subunit. The polypeptide is Large ribosomal subunit protein uL24 (Clostridium botulinum (strain 657 / Type Ba4)).